The primary structure comprises 80 residues: Cell division topological specificity factor (80 aa).

Belongs to the MinE family.

Functionally, prevents the cell division inhibition by proteins MinC and MinD at internal division sites while permitting inhibition at polar sites. This ensures cell division at the proper site by restricting the formation of a division septum at the midpoint of the long axis of the cell. This is Cell division topological specificity factor from Wolinella succinogenes (strain ATCC 29543 / DSM 1740 / CCUG 13145 / JCM 31913 / LMG 7466 / NCTC 11488 / FDC 602W) (Vibrio succinogenes).